The sequence spans 289 residues: Phosphatidylinositol:ceramide inositolphosphotransferase 3 (289 aa).

The next 5 membrane-spanning stretches (helical) occupy residues 33-53 (LVLAGLVFQYIHGLAAHGVHY), 77-97 (AFFSETVFVTIFGSFILWTFH), 115-135 (VFVYLAASQSLRIITFFATQL), 169-189 (VIYGCGDLIFSSHTIFTLVFV), and 199-219 (RWIKHLAWLMAVIQSILIIAS). His-181 is an active-site residue. Active-site residues include His-222 and Asp-226. The chain crosses the membrane as a helical span at residues 223–243 (YTVDIVVAWYTVNLVMFYVDS). Residues 249-289 (AERSSGPSPTPLLPLSTKDSKNKSKEDHQRLLNENNVADDH) form a disordered region. Residues 266–279 (KDSKNKSKEDHQRL) show a composition bias toward basic and acidic residues. The segment covering 280-289 (LNENNVADDH) has biased composition (polar residues).

This sequence belongs to the sphingomyelin synthase family. In terms of tissue distribution, mostly expressed in stems and flowers, and, to a lower extent, in leaves, roots and siliques.

It is found in the membrane. Catalyzes the transfer of the phosphorylinositol group from phosphatidylinositol (PI) to phytoceramide, an essential step in sphingolipid biosynthesis. The chain is Phosphatidylinositol:ceramide inositolphosphotransferase 3 (IPCS3) from Arabidopsis thaliana (Mouse-ear cress).